The sequence spans 134 residues: MGKDTIADIITSIRNADMNRKGTIQIGSTNITENIVKILLREGFIDNVRKHRERNKYFLVLTLRHRRNRKGPHRTILNLRRISRPGLRIYSNYQQIPRILGGMGIVILSTSRGIMTDREARLEGIGGEILCSIW.

This sequence belongs to the universal ribosomal protein uS8 family. As to quaternary structure, part of the 30S ribosomal subunit.

Its subcellular location is the plastid. It is found in the chloroplast. One of the primary rRNA binding proteins, it binds directly to 16S rRNA central domain where it helps coordinate assembly of the platform of the 30S subunit. The chain is Small ribosomal subunit protein uS8c (rps8) from Gossypium hirsutum (Upland cotton).